We begin with the raw amino-acid sequence, 274 residues long: MPFRSNNPITRDELLSRFFPQFHPVTTFNSGLSGGSFLIEHQGQRFVVRQPHDPDAPQSAFLRQYRALSQLPASIAPKPHLYLRDWMVVDYLPGAVKTYLPDTNELAGLLYYLHQQPRFGWRITLLPLLELYWQQSDPARRTVGWLRMLKRLRKAREPRPLRLSPLHMDVHAGNLVHSASGLKLIDWEYAGDGDIALELAAVWVENTEQHRQLVNDYATRAKIYPAQLWRQVRRWFPWLLMLKAGWFEYRWRQIGDQQFIRLADDTWRQLLIKQ.

This sequence belongs to the thiamine kinase family.

It carries out the reaction thiamine + ATP = thiamine phosphate + ADP + H(+). The protein operates within cofactor biosynthesis; thiamine diphosphate biosynthesis; thiamine phosphate from thiamine: step 1/1. In terms of biological role, catalyzes the ATP-dependent phosphorylation of thiamine to thiamine phosphate. Is involved in thiamine salvage. This chain is Thiamine kinase, found in Shigella sonnei (strain Ss046).